A 90-amino-acid polypeptide reads, in one-letter code: UPF0237 protein MJ1558 (90 aa).

One can recognise an ACT domain in the interval 5–79 (VVSVIGQDRT…EELGVQVIVQ (75 aa)).

The protein belongs to the UPF0237 family.

The polypeptide is UPF0237 protein MJ1558 (Methanocaldococcus jannaschii (strain ATCC 43067 / DSM 2661 / JAL-1 / JCM 10045 / NBRC 100440) (Methanococcus jannaschii)).